A 260-amino-acid chain; its full sequence is Vaa serine proteinase homolog 1 (260 aa).

Positions 1 to 18 (MVLIRVLANLLVLQLSYA) are cleaved as a signal peptide. Residues 19-24 (QKSSEL) constitute a propeptide that is removed on maturation. Residues 25 to 251 (VIGGDECNIN…YTDWIQSIIA (227 aa)) form the Peptidase S1 domain. Disulfide bonds link Cys31–Cys165, Cys52–Cys68, Cys100–Cys258, Cys144–Cys212, Cys176–Cys191, and Cys202–Cys227. N-linked (GlcNAc...) asparagine glycosylation is present at Asn123. A key residues for binding to FVIIIa region spans residues 172–186 (DYSVCQKVYRKLPEK). Residue Asn253 is glycosylated (N-linked (GlcNAc...) asparagine).

The protein belongs to the peptidase S1 family. Snake venom subfamily. Post-translationally, N-glycosylated. The toxin exists in multiple glycoforms. In terms of tissue distribution, expressed by the venom gland.

The protein resides in the secreted. Functionally, this is the first member of the serine protease family that has strong anticoagulant activity and lacks enzymatic activity. It inhibits activities of three blood coagulation complexes: (1) prothrombinase complex (composed of blood coagulation factors Va and Xa (F5 and F10)) (IC(50)=164.1 nM), (2) intrinsic tenase complex (composed of factors VIIIa and IXa (F8 and F9)), and (3) extrinsic tenase complex (composed of tissue factor and factor VIIa (F7)). The toxin also has been observed to bind prothrombin, factor FVa, non-activated and activated forms of factors FVII (F7) (FVII and FVIIa), factor FVIIIa (F8), factors FIX and FIXa (F9) and factors FX and FXa (F10). The toxin inhibits the activity of the intrinsic tenase complex mainly by competing with FIXa (F9) for binding to FVIIIa (F8). This is Vaa serine proteinase homolog 1 from Vipera ammodytes ammodytes (Western sand viper).